Consider the following 206-residue polypeptide: Small ribosomal subunit protein uS4 (206 aa).

The region spanning 96-156 is the S4 RNA-binding domain; the sequence is NRLDNVTYRI…KNSKLQSRIK (61 aa).

It belongs to the universal ribosomal protein uS4 family. In terms of assembly, part of the 30S ribosomal subunit. Contacts protein S5. The interaction surface between S4 and S5 is involved in control of translational fidelity.

One of the primary rRNA binding proteins, it binds directly to 16S rRNA where it nucleates assembly of the body of the 30S subunit. In terms of biological role, with S5 and S12 plays an important role in translational accuracy. This Buchnera aphidicola subsp. Baizongia pistaciae (strain Bp) protein is Small ribosomal subunit protein uS4.